A 93-amino-acid chain; its full sequence is Integration host factor subunit beta (93 aa).

It belongs to the bacterial histone-like protein family. As to quaternary structure, heterodimer of an alpha and a beta chain.

Its function is as follows. This protein is one of the two subunits of integration host factor, a specific DNA-binding protein that functions in genetic recombination as well as in transcriptional and translational control. The polypeptide is Integration host factor subunit beta (ihfB) (Cereibacter sphaeroides (strain ATCC 17023 / DSM 158 / JCM 6121 / CCUG 31486 / LMG 2827 / NBRC 12203 / NCIMB 8253 / ATH 2.4.1.) (Rhodobacter sphaeroides)).